We begin with the raw amino-acid sequence, 54 residues long: Snake venom 5'-nucleotidase (54 aa).

Residues Asp11 and His13 each contribute to the Zn(2+) site. The N-linked (GlcNAc...) asparagine glycan is linked to Asn46.

Belongs to the 5'-nucleotidase family. Requires Zn(2+) as cofactor. Venom 5'-nucleotidases (or a part thereof) may be released into the venom via exosome-like vesicles. They may be attached via a GPI anchor to the membrane of these vesicles. Soluble forms of 5'-nucleotidase might be released by cleavage of the ectodomain in the exosome-like vesicles or venom gland cells. In terms of tissue distribution, expressed by the venom gland.

The protein resides in the membrane. The catalysed reaction is a ribonucleoside 5'-phosphate + H2O = a ribonucleoside + phosphate. Functionally, hydrolyzes nucleotides into nucleosides. Snake venom 5'-nucleotidases are widely distributed among venomous snake taxa, but there is a lack of information about their biological activities. They have been shown to inhibit platelet aggregation. This effect may be due to the liberation of inhibitory AMP or adenosine by its action on ADP released upon initiation of aggregation. Venom 5'-nucleotidases are also known to synergistically act in vivo with other toxins like ADPases, phospholipases, and disintegrins to exert a more pronounced anti-coagulant effect. This chain is Snake venom 5'-nucleotidase, found in Gloydius blomhoffii blomhoffii (Japanese mamushi).